The chain runs to 146 residues: Shadow of prion protein (146 aa).

A signal peptide spans 1-24; the sequence is MRGTSAVCWSLLLLIALLSQNVTA. Asparagine 94 carries an N-linked (GlcNAc...) asparagine glycan. The GPI-anchor amidated serine moiety is linked to residue serine 108. Positions 109–146 are cleaved as a propeptide — removed in mature form; sequence GTCPLSSHLSFRLIISIGAILTCSSSSIYVSTKINLGK.

This sequence belongs to the SPRN family.

Its subcellular location is the cell membrane. Functionally, prion-like protein that has PrP(C)-like neuroprotective activity. This Xenopus tropicalis (Western clawed frog) protein is Shadow of prion protein (sprn).